The chain runs to 555 residues: Transmembrane protein 87B (555 aa).

Positions 1-42 are cleaved as a signal peptide; sequence MAAACRSEAGLLPSLLCRRPAGAQLLRVALCLLCWVPAAVDA. Topologically, residues 43-216 are lumenal; sequence VPELGLWTRT…HGYISASDWP (174 aa). N-linked (GlcNAc...) asparagine glycans are attached at residues N68, N160, and N198. A helical membrane pass occupies residues 217–237; the sequence is LMIFYMVMCIVYILYGVLWLL. Residues 238–248 are Cytoplasmic-facing; the sequence is WSACYWKDILR. Residues 249–269 traverse the membrane as a helical segment; it reads IQFWIAAVIFLGMLEKAVFYS. At 270–300 the chain is on the lumenal side; the sequence is EYQNINSTGLSTQGLLIFAELISAVKRTLAR. N275 carries N-linked (GlcNAc...) asparagine glycosylation. The helical transmembrane segment at 301–321 threads the bilayer; that stretch reads LLVIIVSLGYGIVKPRLGTVM. The Cytoplasmic portion of the chain corresponds to 322–323; it reads HR. The chain crosses the membrane as a helical span at residues 324 to 344; sequence VIGLGLLYLIFAAIEGVMRVI. Residues 345 to 351 are Lumenal-facing; the sequence is GGSKHLA. A helical membrane pass occupies residues 352-372; it reads VVLTDIVLAVIDSIFVWFIFI. Residues 373 to 394 are Cytoplasmic-facing; that stretch reads SLAQTMKTLRLRKNTVKFSLYR. The chain crosses the membrane as a helical span at residues 395–415; the sequence is HFTNTLIFAVLASIVFMVWTT. Residues 416 to 429 are Lumenal-facing; sequence KTFRIAKCQSDWME. The helical transmembrane segment at 430–450 threads the bilayer; sequence LWVDDAFWSFLFSVILIVIMF. Residues 451 to 555 are Cytoplasmic-facing; sequence LWRPSANNQR…EKMFSSEKIM (105 aa). Phosphoserine is present on residues S470, S497, and S534.

Belongs to the LU7TM family. TMEM87 subfamily.

It is found in the golgi apparatus membrane. Functionally, may be involved in retrograde transport from endosomes to the trans-Golgi network (TGN). In Mus musculus (Mouse), this protein is Transmembrane protein 87B.